A 620-amino-acid polypeptide reads, in one-letter code: Probable potassium transport system protein Kup (620 aa).

Helical transmembrane passes span 11-31 (LAFL…LYAF), 51-71 (ILSL…LLLV), 100-120 (IAML…VITP), 138-158 (LAPY…AVQA), 167-187 (FFAP…AHAI), 202-222 (AVHF…LVVL), 246-266 (WFAL…AYLL), 288-308 (LILL…SGIF), 334-354 (GQIY…FVML), 364-384 (AAYG…LVLV), 396-416 (VVTI…STST), and 418-438 (LMEG…VMYI).

This sequence belongs to the HAK/KUP transporter (TC 2.A.72) family.

It localises to the cell inner membrane. The catalysed reaction is K(+)(in) + H(+)(in) = K(+)(out) + H(+)(out). Transport of potassium into the cell. Likely operates as a K(+):H(+) symporter. The polypeptide is Probable potassium transport system protein Kup (Vibrio cholerae serotype O1 (strain ATCC 39315 / El Tor Inaba N16961)).